We begin with the raw amino-acid sequence, 155 residues long: Altered inheritance rate of mitochondria protein 29 (155 aa).

Phosphoserine is present on S78.

The protein belongs to the UPF0538 family.

The protein resides in the cytoplasm. May be involved in mitochondrial organization and biogenesis. In Saccharomyces cerevisiae (strain ATCC 204508 / S288c) (Baker's yeast), this protein is Altered inheritance rate of mitochondria protein 29 (AIM29).